A 370-amino-acid polypeptide reads, in one-letter code: DNA replication and repair protein RecF (370 aa).

An ATP-binding site is contributed by 30–37; it reads GENAQGKT.

Belongs to the RecF family.

Its subcellular location is the cytoplasm. Functionally, the RecF protein is involved in DNA metabolism; it is required for DNA replication and normal SOS inducibility. RecF binds preferentially to single-stranded, linear DNA. It also seems to bind ATP. The sequence is that of DNA replication and repair protein RecF from Listeria monocytogenes serotype 4b (strain CLIP80459).